The following is a 390-amino-acid chain: Putative MSV199 domain-containing protein 211L (390 aa).

Residues 181–263 (HDRKAQEEKE…FDLSDVRDRL (83 aa)) are a coiled coil.

This chain is Putative MSV199 domain-containing protein 211L, found in Acheta domesticus (House cricket).